The sequence spans 80 residues: Putative defensin-like protein 28 (80 aa).

Positions 1 to 22 (MLRANVVVSLVIFAALMQCMNG) are cleaved as a signal peptide.

Belongs to the DEFL family.

Its subcellular location is the secreted. This chain is Putative defensin-like protein 28, found in Arabidopsis thaliana (Mouse-ear cress).